The primary structure comprises 85 residues: Small ribosomal subunit protein bS16 (85 aa).

The protein belongs to the bacterial ribosomal protein bS16 family.

This is Small ribosomal subunit protein bS16 from Pseudomonas syringae pv. tomato (strain ATCC BAA-871 / DC3000).